A 115-amino-acid polypeptide reads, in one-letter code: uncharacterized protein (115 aa).

2 helical membrane-spanning segments follow: residues 11-31 (FLYL…LVWN) and 85-105 (GYII…YALI).

The protein to M.thermoautotrophicum MTH1706.

Its subcellular location is the cell membrane. This is an uncharacterized protein from Methanocaldococcus jannaschii (strain ATCC 43067 / DSM 2661 / JAL-1 / JCM 10045 / NBRC 100440) (Methanococcus jannaschii).